The sequence spans 385 residues: uncharacterized protein (385 aa).

The protein belongs to the phage portal family. HK97 subfamily.

This is an uncharacterized protein from Rickettsia bellii (strain RML369-C).